Here is a 397-residue protein sequence, read N- to C-terminus: Putative efflux system protein YvrP (397 aa).

Residues leucine 8–phenylalanine 28 form a helical membrane-spanning segment. Residues glutamate 106 to lysine 183 adopt a coiled-coil conformation.

Belongs to the membrane fusion protein (MFP) (TC 8.A.1) family.

It localises to the cell membrane. This chain is Putative efflux system protein YvrP (yvrP), found in Bacillus subtilis (strain 168).